The sequence spans 62 residues: MMELIPQPRTKFLRVQCPECNNEQIVFGSPATVVKCLTCGKVLVEPRGGKGKVKAKILEILG.

Zn(2+)-binding residues include Cys17, Cys20, Cys36, and Cys39. The segment at 17-39 (CPECNNEQIVFGSPATVVKCLTC) adopts a C4-type zinc-finger fold.

The protein belongs to the eukaryotic ribosomal protein eS27 family. Part of the 30S ribosomal subunit. The cofactor is Zn(2+).

The chain is Small ribosomal subunit protein eS27 from Methanocaldococcus jannaschii (strain ATCC 43067 / DSM 2661 / JAL-1 / JCM 10045 / NBRC 100440) (Methanococcus jannaschii).